The sequence spans 871 residues: MSAPLEHHTPMMAQYLALKGGYPETLLFYRMGDFYELFYADAEKAARLLNITLTQRGQSGGQTVVMAGVPFHALENYLTRLIKLGESVAIAEQVGEVGAAKGPLERKVVRVITPGTLTDTELLSDKAESLLLSLHQAARARCGLAWLSVTQGRVHLAECAHDELGAWLARVAPSEIIYSAGVTQRFEQQLQALRQSGAFDCPMRTRPDWQFDQALGERKLLEHLGAASLQAWDAQDLGAAQAAAAGLLAYAEHTQGRALTHVHSVQAQRGDELIDLPGSTRRNLELVKTLRGDDAPTLLSLLDNCMTGMGSRLLKTWLLEPHRERHQARQRLSASTALRGAAAGAGPWATLREQIKGASDVERITARIALRQVRPRELPGLVKTLQKAQLLAQHGQIPEPYLMQIFDQLHPPEGCAELLQAAIAEEPAALVREGGVIATGFDAELDELRALQTDCDGFLLDLETREKARTGIANLRVQFNKVHGFYIEVTSSNLERVPADYRRRQTLKNAERFITPELKAFEDKALSANERALVREKWLYEQILDRLQPHVPALTRLAQALATLDVLCTLAERSLTLNWCAPQFVSEPCIEIEGGRHPVVEARLAETASGSFIANHTRLNANTRMQLITGPNMGGKSTYMRQVALIVLLASIGSHVPASSCRLGPIDAIHTRIGAADDLANAQSTFMLEMTEAAHILHAATAHSLVLMDEIGRGTSTFDGLALASGIATHLHDKTRAFTLFATHYFELTDLPAKARHAINMHVSATESGADIVFLHEIQPGPASRSYGIQVAKLAGMPPPVLHHARRTLAALEERAGAGQLQVDLFAAPKEEPESKSASPVEAALAGINPDALSPREALDALYQLKRMAGK.

630-637 (GPNMGGKS) lines the ATP pocket. Residues 830–849 (KEEPESKSASPVEAALAGIN) form a disordered region.

The protein belongs to the DNA mismatch repair MutS family.

This protein is involved in the repair of mismatches in DNA. It is possible that it carries out the mismatch recognition step. This protein has a weak ATPase activity. The polypeptide is DNA mismatch repair protein MutS (Verminephrobacter eiseniae (strain EF01-2)).